Reading from the N-terminus, the 213-residue chain is Holliday junction resolvase RecU (213 aa).

4 residues coordinate Mg(2+): Thr98, Asp100, Glu113, and Gln132.

It belongs to the RecU family. It depends on Mg(2+) as a cofactor.

It is found in the cytoplasm. The enzyme catalyses Endonucleolytic cleavage at a junction such as a reciprocal single-stranded crossover between two homologous DNA duplexes (Holliday junction).. In terms of biological role, endonuclease that resolves Holliday junction intermediates in genetic recombination. Cleaves mobile four-strand junctions by introducing symmetrical nicks in paired strands. Promotes annealing of linear ssDNA with homologous dsDNA. Required for DNA repair, homologous recombination and chromosome segregation. This Ligilactobacillus salivarius (strain UCC118) (Lactobacillus salivarius) protein is Holliday junction resolvase RecU.